The chain runs to 152 residues: Venom protein family 1 protein 2 (152 aa).

The signal sequence occupies residues 1 to 21 (MAKLVFISFLVASFCLIGCFG). An intrachain disulfide couples Cys70 to Cys150.

The protein belongs to the insect vpf1 family. As to expression, expressed by the venom gland (posterior main gland) (at protein level).

It is found in the secreted. The chain is Venom protein family 1 protein 2 from Platymeris rhadamanthus (Red spot assassin bug).